The sequence spans 236 residues: Ribonuclease HII (236 aa).

In terms of domain architecture, RNase H type-2 spans Arg27 to Pro219. Residues Asp33, Glu34, and Asp128 each coordinate a divalent metal cation. Residues Arg212 to Asp236 form a disordered region.

This sequence belongs to the RNase HII family. Mn(2+) serves as cofactor. It depends on Mg(2+) as a cofactor.

The protein localises to the cytoplasm. The enzyme catalyses Endonucleolytic cleavage to 5'-phosphomonoester.. Its function is as follows. Endonuclease that specifically degrades the RNA of RNA-DNA hybrids. The protein is Ribonuclease HII of Ralstonia nicotianae (strain ATCC BAA-1114 / GMI1000) (Ralstonia solanacearum).